Here is a 375-residue protein sequence, read N- to C-terminus: Tyrosine--tRNA ligase (375 aa).

Residues Y37, Y168, Q172, D175, and Q190 each coordinate L-tyrosine. The 'KMSKS' region signature appears at 251 to 255 (KMSKS). K254 provides a ligand contact to ATP.

This sequence belongs to the class-I aminoacyl-tRNA synthetase family. TyrS type 4 subfamily. Homodimer.

The protein localises to the cytoplasm. It carries out the reaction tRNA(Tyr) + L-tyrosine + ATP = L-tyrosyl-tRNA(Tyr) + AMP + diphosphate + H(+). Catalyzes the attachment of tyrosine to tRNA(Tyr) in a two-step reaction: tyrosine is first activated by ATP to form Tyr-AMP and then transferred to the acceptor end of tRNA(Tyr). This chain is Tyrosine--tRNA ligase, found in Thermococcus onnurineus (strain NA1).